Consider the following 1208-residue polypeptide: E3 ubiquitin-protein ligase DZIP3 (1208 aa).

Basic and acidic residues predominate over residues 10-29 (VRHPAVEDQRKEETENKLEK). Disordered regions lie at residues 10-38 (VRHP…NKQE) and 637-698 (GTSI…PHSV). Coiled coils occupy residues 14 to 43 (AVED…DIPT), 647 to 676 (ESLK…SKED), 792 to 853 (IASL…SKLN), and 904 to 939 (QLKA…KVKQ). Polar residues predominate over residues 637-647 (GTSIPSESSTE). The segment covering 648–657 (SLKDLQEVKS) has biased composition (basic and acidic residues). The span at 658-669 (KQRKKKKTKNKK) shows a compositional bias: basic residues. Basic and acidic residues predominate over residues 670-693 (NKDSKEDQVPYVVEKEEQLRKEQA). The interval 1088 to 1145 (KSQSQGKSVSNVNCVSPSHSPSQPDAAQPPKPAWRPLTSQGPATWEGASNPDEEEEEE) is disordered. Over residues 1089 to 1112 (SQSQGKSVSNVNCVSPSHSPSQPD) the composition is skewed to polar residues. Residues 1148 to 1188 (CVICHENLSPENLSVLPCAHKFHAQCIRPWLMQQGTCPTCR) form an RING-type; atypical zinc finger.

In terms of assembly, interacts with DAZ proteins. In terms of tissue distribution, widely expressed at low level. Highly expressed in skeletal muscle, kidney and heart. Expressed at low level in placenta, lung, brain, liver and pancreas.

It localises to the cytoplasm. It catalyses the reaction S-ubiquitinyl-[E2 ubiquitin-conjugating enzyme]-L-cysteine + [acceptor protein]-L-lysine = [E2 ubiquitin-conjugating enzyme]-L-cysteine + N(6)-ubiquitinyl-[acceptor protein]-L-lysine.. It participates in protein modification; protein ubiquitination. E3 Ubiquitin ligase proteins mediate ubiquitination and subsequent proteasomal degradation of target proteins. E3 ubiquitin ligases accept ubiquitin from an E2 ubiquitin-conjugating enzyme in the form of a thioester and then directly transfers the ubiquitin to targeted substrates. Able to specifically bind RNA. The polypeptide is E3 ubiquitin-protein ligase DZIP3 (DZIP3) (Homo sapiens (Human)).